A 191-amino-acid chain; its full sequence is Peptide methionine sulfoxide reductase (191 aa).

2 disordered regions span residues 1–20 (MASS…TPEN) and 168–191 (EKGG…KCYG).

This sequence belongs to the MsrA Met sulfoxide reductase family.

The catalysed reaction is L-methionyl-[protein] + [thioredoxin]-disulfide + H2O = L-methionyl-(S)-S-oxide-[protein] + [thioredoxin]-dithiol. The enzyme catalyses [thioredoxin]-disulfide + L-methionine + H2O = L-methionine (S)-S-oxide + [thioredoxin]-dithiol. Has an important function as a repair enzyme for proteins that have been inactivated by oxidation. Catalyzes the reversible oxidation-reduction of methionine sulfoxide in proteins to methionine. In Fragaria ananassa (Strawberry), this protein is Peptide methionine sulfoxide reductase.